Consider the following 226-residue polypeptide: HTH-type transcriptional regulator Rv0324 (226 aa).

Positions 7-101 (RKAALLDQVA…LVQVVADEHL (95 aa)) constitute an HTH arsR-type domain. Positions 41–64 (VEAIATATGMNLTTASANLQALKS) form a DNA-binding region, H-T-H motif. One can recognise a Rhodanese domain in the interval 129 to 218 (EAGEVTLVDV…WRLAGLPVDE (90 aa)). Residue cysteine 177 is the Cysteine persulfide intermediate of the active site.

Functionally, part of a regulatory network that coordinates tolerance to the antitubercular drug bedaquiline. The protein is HTH-type transcriptional regulator Rv0324 of Mycobacterium tuberculosis (strain ATCC 25618 / H37Rv).